The sequence spans 600 residues: DDB1- and CUL4-associated factor 15 (600 aa).

A disordered region spans residues 1-29 (MAPSSKSERNSGAGSAGGGPGGTGGKRAV). Gly residues predominate over residues 14-27 (GSAGGGPGGTGGKR). Residue Ser-50 is modified to Phosphoserine. Positions 193, 196, 211, and 214 each coordinate Zn(2+). Position 314 is a phosphoserine (Ser-314). The segment covering 334 to 343 (AKGSPLEETR) has biased composition (basic and acidic residues). The disordered stretch occupies residues 334–384 (AKGSPLEETRLPSSLGPSSSRCRPSLEPQAPSGEVVPRDSPPAAETTAPEP). Composition is skewed to low complexity over residues 344–359 (LPSS…RPSL) and 374–384 (PPAAETTAPEP).

In terms of assembly, component of the DCX(DCAF15) complex, also named CLR4(DCAF15) complex, composed of DCAF15, DDB1, cullin-4 (CUL4A or CUL4B), DDA1 and RBX1.

The protein operates within protein modification; protein ubiquitination. Substrate-recognition component of the DCX(DCAF15) complex, a cullin-4-RING E3 ubiquitin-protein ligase complex that mediates ubiquitination and degradation of target proteins. The DCX(DCAF15) complex acts as a regulator of the natural killer (NK) cells effector functions, possibly by mediating ubiquitination and degradation of cohesin subunits SMC1A and SMC3. May play a role in the activation of antigen-presenting cells (APC) and their interaction with NK cells. This is DDB1- and CUL4-associated factor 15 from Mus musculus (Mouse).